Here is a 362-residue protein sequence, read N- to C-terminus: Methionine import ATP-binding protein MetN (362 aa).

One can recognise an ABC transporter domain in the interval 2 to 241 (IHIKNLSKTY…PQHDVTRAMV (240 aa)). 38–45 (GPSGAGKS) is a binding site for ATP.

It belongs to the ABC transporter superfamily. Methionine importer (TC 3.A.1.24) family. The complex is composed of two ATP-binding proteins (MetN), two transmembrane proteins (MetI) and a solute-binding protein (MetQ).

The protein resides in the cell inner membrane. The enzyme catalyses L-methionine(out) + ATP + H2O = L-methionine(in) + ADP + phosphate + H(+). It catalyses the reaction D-methionine(out) + ATP + H2O = D-methionine(in) + ADP + phosphate + H(+). Its function is as follows. Part of the ABC transporter complex MetNIQ involved in methionine import. Responsible for energy coupling to the transport system. This chain is Methionine import ATP-binding protein MetN, found in Bordetella avium (strain 197N).